A 647-amino-acid polypeptide reads, in one-letter code: MAQAHRESVLAAACVRTPVNPYTKAPLTLYERELGDRPHPSASVSPRGPARTSMEVPADLESRFCKTRRCQDWVFDISDIHHSEKDYYVQVEKLKNAHLHNMEQLEKMYDRKLHLNGVHNPENEKRVAEDVYRSAWEPKSLLPAQHDHLKQSRSVSPSLAESSHESTDEDYGDSEHSVSARNKILHMWNEFTVEDYVRDSEYFSQEIAKNKTSKKSKEWSHKITIPEPFQMTVRESKKREMNIKSKSEIELENNLLKEKLEEEAECQKKFRANPVPSSVYLPLYQEIVERNEERRRFVKEKSKEILLATQKPFQFIEREERKKTLRLDLMQFSTSETSTSHFKAKPVPKSIYGTSIVERLKEEELYRGIRTHMRAQELLQSSSYPTSTLASGAHSGTKKGRCYKLKGKQEHKPKISDTIPHFQTIHENQQKRLLESKSAKHVTLCEPFQLRTSNITSHKEKIEMDIQADEENLKETRWPYKSPRASAQIHSAGTMNLRLETLSQTPRSTESSKRREYAIRKREKQRTKDYMKELEAMEQRVLNKPLLIERVAQRNALLSAEKQYLNVLHELGLCEEFVTKNGQSSSVDEHVGVREEKKIPQGESTEGTLALEDLLDDEEDDKYDCESEEAEEEDAYSTDEDHRIEEI.

2 disordered regions span residues 32-55 (RELG…TSME) and 143-175 (PAQH…GDSE). Over residues 152–161 (SRSVSPSLAE) the composition is skewed to polar residues. 2 coiled-coil regions span residues 243 to 268 (IKSK…ECQK) and 518 to 544 (AIRK…VLNK). Disordered regions lie at residues 504–524 (QTPR…KREK) and 588–647 (DEHV…IEEI). 2 stretches are compositionally biased toward basic and acidic residues: residues 510 to 524 (ESSK…KREK) and 588 to 600 (DEHV…KKIP). The span at 613–638 (DLLDDEEDDKYDCESEEAEEEDAYST) shows a compositional bias: acidic residues.

It belongs to the FAM161 family.

The protein localises to the cytoplasm. The protein resides in the cytoskeleton. Its subcellular location is the cilium basal body. It localises to the cell projection. It is found in the cilium. The protein localises to the microtubule organizing center. The protein resides in the centrosome. Its subcellular location is the centriole. In terms of biological role, involved in ciliogenesis. The chain is Protein FAM161A (fam161a) from Xenopus laevis (African clawed frog).